The chain runs to 325 residues: DNA repair and recombination protein RadA (325 aa).

107-114 (GEFGSGKT) provides a ligand contact to ATP.

This sequence belongs to the eukaryotic RecA-like protein family.

Functionally, involved in DNA repair and in homologous recombination. Binds and assemble on single-stranded DNA to form a nucleoprotein filament. Hydrolyzes ATP in a ssDNA-dependent manner and promotes DNA strand exchange between homologous DNA molecules. In Methanococcoides burtonii (strain DSM 6242 / NBRC 107633 / OCM 468 / ACE-M), this protein is DNA repair and recombination protein RadA.